The chain runs to 103 residues: Large ribosomal subunit protein bL21 (103 aa).

The protein belongs to the bacterial ribosomal protein bL21 family. In terms of assembly, part of the 50S ribosomal subunit. Contacts protein L20.

In terms of biological role, this protein binds to 23S rRNA in the presence of protein L20. This Hamiltonella defensa subsp. Acyrthosiphon pisum (strain 5AT) protein is Large ribosomal subunit protein bL21.